The primary structure comprises 181 residues: uncharacterized protein (181 aa).

The N-terminal stretch at 1–22 (MNKKSLLVVLVIALAVVPFAAT) is a signal peptide.

This is an uncharacterized protein from Halorubrum pleomorphic virus 1 (HRPV-1).